Consider the following 192-residue polypeptide: Phage-like element PBSX protein XkdU (192 aa).

It to B.subtilis YqcA.

This chain is Phage-like element PBSX protein XkdU (xkdU), found in Bacillus subtilis (strain 168).